The following is a 435-amino-acid chain: MENIKIIPSELNGEINIPPSKSLAHRAIISAGLSEGVSNIENIIFSEDIKATIRGMKSLGIEIEDITNEYKKGSERSTLKVIGKEKLTLENDTIDCSESGSTLRFLIPIALRAEKEVTFTGRGKLVSRPLDVYYNIFENQGIKYKTSNNELPLTVDGKINPGEFHVKGNVSSQFITGLMYTLPFLDGDSKIIITTELESKGYVDLTIDTLKKFGVEIENNNYKEFIIKGNQKSTSRDYRVQGDFSQGAFFIVAGILGSNVKTLDLDIDSLQGDKAIIDIVKKMGANIKVGRDYIETKKSKTHGITIDASECPDLVPILAVLGAVSHGTTKIINAERLRIKECDRLKAMATELSKIGADIKELEDGLIIKGKYKLKGGVVDSWNDHRIAMAMAIASIKCTEPVIIQNSMAVNKSYPDFWKDFEKVGGIIDEWSMGK.

3-phosphoshikimate-binding residues include Lys-21, Ser-22, and Arg-26. Lys-21 is a binding site for phosphoenolpyruvate. Gly-100 and Arg-128 together coordinate phosphoenolpyruvate. Residues Ser-171, Ser-172, Gln-173, Ser-199, Asp-313, and Lys-340 each coordinate 3-phosphoshikimate. Gln-173 contacts phosphoenolpyruvate. Asp-313 functions as the Proton acceptor in the catalytic mechanism. Phosphoenolpyruvate-binding residues include Arg-344, Arg-386, and Lys-412.

This sequence belongs to the EPSP synthase family. As to quaternary structure, monomer.

The protein localises to the cytoplasm. The enzyme catalyses 3-phosphoshikimate + phosphoenolpyruvate = 5-O-(1-carboxyvinyl)-3-phosphoshikimate + phosphate. The protein operates within metabolic intermediate biosynthesis; chorismate biosynthesis; chorismate from D-erythrose 4-phosphate and phosphoenolpyruvate: step 6/7. Functionally, catalyzes the transfer of the enolpyruvyl moiety of phosphoenolpyruvate (PEP) to the 5-hydroxyl of shikimate-3-phosphate (S3P) to produce enolpyruvyl shikimate-3-phosphate and inorganic phosphate. The sequence is that of 3-phosphoshikimate 1-carboxyvinyltransferase from Clostridium novyi (strain NT).